A 201-amino-acid chain; its full sequence is Orotidine 5'-phosphate decarboxylase (201 aa).

Residues Asp8, Lys26, 52–61 (DLKFCDIPST), Thr106, Arg153, Gln161, Gly180, and Arg181 each bind substrate. The active-site Proton donor is Lys54.

This sequence belongs to the OMP decarboxylase family. Type 1 subfamily. In terms of assembly, homodimer.

The catalysed reaction is orotidine 5'-phosphate + H(+) = UMP + CO2. Its pathway is pyrimidine metabolism; UMP biosynthesis via de novo pathway; UMP from orotate: step 2/2. Its function is as follows. Catalyzes the decarboxylation of orotidine 5'-monophosphate (OMP) to uridine 5'-monophosphate (UMP). The protein is Orotidine 5'-phosphate decarboxylase (pyrF) of Thermotoga maritima (strain ATCC 43589 / DSM 3109 / JCM 10099 / NBRC 100826 / MSB8).